A 284-amino-acid polypeptide reads, in one-letter code: WUSCHEL-related homeobox 10 (284 aa).

The interval 1-43 is disordered; it reads MDRTATASWEVMSRRGEQQQQLMMQAPASHNGGSGGGEPARSR. Positions 39 to 103 form a DNA-binding region, homeobox; WUS-type; the sequence is PARSRWAPKP…NRRSRSRRRA (65 aa).

The protein belongs to the WUS homeobox family.

The protein localises to the nucleus. Its function is as follows. Transcription factor which may be involved in developmental processes. In Oryza sativa subsp. japonica (Rice), this protein is WUSCHEL-related homeobox 10 (WOX10).